The following is a 160-amino-acid chain: Small ribosomal subunit protein bS6 (160 aa).

This sequence belongs to the bacterial ribosomal protein bS6 family.

Its function is as follows. Binds together with bS18 to 16S ribosomal RNA. The protein is Small ribosomal subunit protein bS6 of Ureaplasma parvum serovar 3 (strain ATCC 27815 / 27 / NCTC 11736).